The following is a 217-amino-acid chain: Eukaryotic translation initiation factor 4E (217 aa).

The span at M1–T11 shows a compositional bias: low complexity. The interval M1–E27 is disordered. Position 2 is an N-acetylalanine (A2). A Phosphothreonine modification is found at T22. The segment at H37 to Q40 is EIF4EBP1/2/3 binding. W56–Q57 is a binding site for mRNA. Positions W73 to N77 are EIF4EBP1/2/3 binding. W102–E103 contributes to the mRNA binding site. The EIF4EBP1/2/3 binding stretch occupies residues E132–G139. Residues R157–K162 and T205–S207 each bind mRNA. S209 is modified (phosphoserine; by PKC and MKNK2).

Belongs to the eukaryotic initiation factor 4E family. In terms of assembly, eIF4F is a multi-subunit complex, the composition of which varies with external and internal environmental conditions. It is composed of at least EIF4A, EIF4E and EIF4G1/EIF4G3. EIF4E is also known to interact with other partners. Interacts with EIF4ENIF1/4E-T; promotes recruitment to P-bodies and import into the nucleus. Hypophosphorylated EIF4EBP1, EIF4EBP2 and EIF4EBP3 compete with EIF4G1/EIF4G3 to interact with EIF4E; insulin stimulated MAP-kinase (MAPK1 and MAPK3) phosphorylation of EIF4EBP1 causes dissociation of the complex allowing EIF4G1/EIF4G3 to bind and consequent initiation of translation. Interacts mutually exclusive with EIF4A1 or EIF4A2. Interacts with NGDN and PIWIL2. Component of the CYFIP1-EIF4E-FMR1 complex composed of CYFIP, EIF4E and FMR1. Interacts directly with CYFIP1. Interacts with CLOCK. Binds to MKNK2 in nucleus. Interacts with LIMD1, WTIP and AJUBA. Interacts with APOBEC3G in an RNA-dependent manner. Interacts with LARP1. Interacts with METTL3. Interacts with RBM24; this interaction prevents EIF4E from binding to p53/TP53 mRNA and inhibits the assembly of translation initiation complex. Interacts with DDX3X; interaction is direct and in an RNA-independent manner; this interaction enhances EIF4E cap-binding ability and is required for the repression of cap-dependent translation and the increase of IRES-mediated translation. DDX3X competes with EIF4G1 for interaction with EIF4E. Interacts with EIF4G1; which in a mutual exclusive interaction associates either with EIF1 or with EIF4E on a common binding site. Interacts with BTG4 and CNOT7. Interacts with LRPPRC (via N-terminus); the interaction promotes association of EIF4E with 4ESE-containing mRNAs. Interacts with mRNA cleavage enzyme CPSF3 and its cofactor CPSF1. Interacts (via RING-type zinc finger) with PML; the interaction results in conformational changes of both interacting proteins and reduces EIF4E affinity for the 5' m7G cap of mRNA, thus reducing EIF4E-mediated mRNA nuclear export. Interacts with homeobox protein HHEX/PRH; the interaction inhibits EIF4E-mediated mRNA nuclear export. Interacts with homeobox protein HOXA9; the interaction positively regulates EIF4E-mediated mRNA nuclear export. Interacts with homeobox protein EMX2. As to quaternary structure, (Microbial infection) Interacts with murine norovirus viral genome-linked protein; this interaction plays a role in translation of viral proteins. Phosphorylation increases the ability of the protein to bind to mRNA caps and to form the eIF4F complex. Phosphorylation also enhances its mRNA transport function. Phosphorylation at Ser-209 is not essential for protein synthesis.

The protein localises to the cytoplasm. The protein resides in the P-body. It localises to the stress granule. Its subcellular location is the nucleus. It is found in the nucleus speckle. The protein localises to the nuclear body. Functionally, acts in the cytoplasm to initiate and regulate protein synthesis and is required in the nucleus for export of a subset of mRNAs from the nucleus to the cytoplasm which promotes processes such as RNA capping, processing and splicing. Component of the protein complex eIF4F, which is involved in the recognition of the mRNA cap, ATP-dependent unwinding of 5'-terminal secondary structure and recruitment of mRNA to the ribosome. This protein recognizes and binds the 7-methylguanosine (m7G)-containing mRNA cap during an early step in the initiation of protein synthesis and facilitates ribosome binding by inducing the unwinding of the mRNAs secondary structures. Together with EIF4G1, antagonizes the scanning promoted by EIF1-EIF4G1 and is required for TISU translation, a process where the TISU element recognition makes scanning unnecessary. In addition to its role in translation initiation, also acts as a regulator of translation and stability in the cytoplasm. Component of the CYFIP1-EIF4E-FMR1 complex which binds to the mRNA cap and mediates translational repression: in the complex, EIF4E mediates the binding to the mRNA cap. Component of a multiprotein complex that sequesters and represses translation of proneurogenic factors during neurogenesis. In P-bodies, component of a complex that mediates the storage of translationally inactive mRNAs in the cytoplasm and prevents their degradation. May play an important role in spermatogenesis through translational regulation of stage-specific mRNAs during germ cell development. As well as its roles in translation, also involved in mRNA nucleocytoplasmic transport. Its role in mRNA export from the nucleus to the cytoplasm relies on its ability to bind the m7G cap of RNAs and on the presence of the 50-nucleotide EIF4E sensitivity element (4ESE) in the 3'UTR of sensitive transcripts. Interaction with the 4ESE is mediated by LRPPRC which binds simultaneously to both EIF4E and the 4ESE, thereby acting as a platform for assembly for the RNA export complex. EIF4E-dependent mRNA export is independent of ongoing protein or RNA synthesis and is also NFX1-independent but is XPO1-dependent with LRPPRC interacting with XPO1 to form an EIF4E-dependent mRNA export complex. Alters the composition of the cytoplasmic face of the nuclear pore to promote RNA export by reducing RANBP2 expression, relocalizing nucleoporin NUP214 and increasing expression of RANBP1 and RNA export factors DDX19 and GLE1. Promotes the nuclear export of cyclin CCND1 mRNA. Promotes the nuclear export of NOS2/iNOS mRNA. Promotes the nuclear export of MDM2 mRNA. Also promotes the export of additional mRNAs, including others involved in the cell cycle. In the nucleus, binds to capped splice factor-encoding mRNAs and stimulates their nuclear export to enhance splice factor production by increasing their cytoplasmic availability to the translation machinery. May also regulate splicing through interaction with the spliceosome in an RNA and m7G cap-dependent manner. Also binds to some pre-mRNAs and may play a role in their recruitment to the spliceosome. Promotes steady-state capping of a subset of coding and non-coding RNAs by mediating nuclear export of capping machinery mRNAs including RNMT, RNGTT and RAMAC to enhance their translation. Stimulates mRNA 3'-end processing by promoting the expression of several core cleavage complex factors required for mRNA cleavage and polyadenylation, and may also have a direct effect through its interaction with the CPSF3 cleavage enzyme. Rescues cells from apoptosis by promoting activation of serine/threonine-protein kinase AKT1 through mRNA export of NBS1 which potentiates AKT1 phosphorylation and also through mRNA export of AKT1 effectors, allowing for increased production of these proteins. The polypeptide is Eukaryotic translation initiation factor 4E (Mus musculus (Mouse)).